Consider the following 493-residue polypeptide: Voltage-gated potassium channel regulatory subunit KCNF1 (493 aa).

The Cytoplasmic portion of the chain corresponds to 1-183 (MDASAEQSLP…KPESSCPARV (183 aa)). Residues 184–204 (VAVLSFLLILVSSVVMCMGTI) form a helical membrane-spanning segment. The Extracellular segment spans residues 205-223 (PELQVVDSEGNRVEHPTLE). Residues 224–244 (NVETACIGWFTLEYLLRLFSS) traverse the membrane as a helical segment. The Cytoplasmic portion of the chain corresponds to 245-249 (PNKLH). Residues 250 to 270 (FALSFMNIVDVLAILPFYVSL) form a helical membrane-spanning segment. Residues 271 to 289 (TLTHLGARMMELTNVQQAV) lie on the Extracellular side of the membrane. Residues 290–310 (QALRIMRIARIFKLARHSSGL) traverse the membrane as a helical; Voltage-sensor segment. Residues 311–324 (QTLTYALKRSFKEL) lie on the Cytoplasmic side of the membrane. The chain crosses the membrane as a helical span at residues 325-345 (GLLLMYLAVGIFVFSALGYTM). Residues 346–357 (EQSHPETLFKSI) are Extracellular-facing. The pore-forming intramembrane region spans 358–378 (PQSFWWAIITMTTVGYGDIYP). The short motif at 370–375 (TVGYGD) is the Selectivity filter element. At 379 to 385 (KTTLGKL) the chain is on the extracellular side. A helical membrane pass occupies residues 386–406 (NAAISFLCGVIAIALPIHPII). At 407–493 (NNFVRYYNKQ…HHRTRLQSCK (87 aa)) the chain is on the cytoplasmic side. The segment at 433 to 468 (NSSSAESKPGGSRSDLDTLPPEPAAREGPSWGSRLK) is disordered.

Belongs to the potassium channel family. F (TC 1.A.1.2) subfamily. Kv5.1/KCNF1 sub-subfamily. In terms of assembly, heterotetramer with KCNB1 or KCNB2. In terms of tissue distribution, expressed in brain namely in the piriform cortex, olfactory tubercle, and medial habenular nucleus. Also expressed in the medial amygdaloid nuclei and the lateral amygdaloid area.

Its subcellular location is the cell membrane. Regulatory alpha-subunit of the voltage-gated potassium (Kv) channel which, when coassembled with KCNB1 or KCNB2, can modulate their expression and their gating kinetics by acting on deactivation upon repolarization and inactivation during maintained depolarization. Accelerates inactivation but has relatively little effect on deactivation. Coexpression with KCNB1 or KCNB2 markedly slows inactivation. Each modulatory subunit has its own specific properties of regulation, and can lead to extensive inhibitions, to large changes in kinetics, and/or to large shifts in the voltage dependencies of the inactivation process. The gating kinetics depends on the nature and stoichiometry of the associated regulatory sunbunit. Fails to produce a potassium current when expressed alone. This is Voltage-gated potassium channel regulatory subunit KCNF1 from Rattus norvegicus (Rat).